An 871-amino-acid chain; its full sequence is Transient receptor potential cation channel subfamily V member 4 (871 aa).

2 disordered regions span residues 1–68 and 110–143; these read MADP…PNLR and YGTY…PQPP. Residues 1–469 lie on the Cytoplasmic side of the membrane; that stretch reads MADPGDGPRA…RDKWRKFGAV (469 aa). Y110 carries the post-translational modification Phosphotyrosine. Basic and acidic residues predominate over residues 116–129; sequence HPSDNKRWRRKVVE. Residues K192, K197, N201, 236–239, and R248 each bind ATP; that span reads YRGQ. ANK repeat units lie at residues 237 to 266 and 284 to 313; these read RGQT…DVHA and FGEL…KKAD. A 1,2-diacyl-sn-glycero-3-phospho-(1D-myo-inositol-4,5-bisphosphate) is bound at residue 249-251; that stretch reads RCK. At Y253 the chain carries Phosphotyrosine. A 1,2-diacyl-sn-glycero-3-phospho-(1D-myo-inositol-4,5-bisphosphate) contacts are provided by residues 296–299 and K344; that span reads NQPH. The stretch at 369-398 is one ANK 3 repeat; that stretch reads DGLSPLMMAAKTGKIGVFQHIIRREVTDED. Residues 470 to 490 form a helical membrane-spanning segment; that stretch reads SFYINVVSYLCAMVIFTLTAY. Topologically, residues 491–507 are extracellular; sequence YQPLEGTPPYPYRTTVD. The chain crosses the membrane as a helical span at residues 508–534; that stretch reads YLRLAGEVITLLTGVLFFFTSIKDLFM. The Cytoplasmic segment spans residues 535–547; that stretch reads KKCPGVNSLFVDG. The chain crosses the membrane as a helical span at residues 548–568; the sequence is SFQLLYFIYSVLVVVSAALYL. Over 569–572 the chain is Extracellular; the sequence is AGIE. Residues 573 to 593 form a helical membrane-spanning segment; sequence AYLAVMVFALVLGWMNALYFT. Over 594-608 the chain is Cytoplasmic; the sequence is RGLKLTGTYSIMIQK. The chain crosses the membrane as a helical span at residues 609 to 636; sequence ILFKDLFRFLLVYLLFMIGYASALVTLL. Topologically, residues 637–665 are extracellular; sequence NPCTNMKVCNEDQSNCTVPSYPACRDSET. An intramembrane region (pore-forming) is located at residues 666–685; it reads FSAFLLDLFKLTIGMGDLEM. Residues 679–682 carry the Selectivity filter motif; it reads GMGD. Residue D682 participates in Ca(2+) binding. At 686–693 the chain is on the extracellular side; sequence LSSAKYPV. The helical transmembrane segment at 694–722 threads the bilayer; the sequence is VFILLLVTYIILTFVLLLNMLIALMGETV. The Cytoplasmic segment spans residues 723–871; the sequence is GQVSKESKHI…PKWRAEDAPL (149 aa). Y805 carries the phosphotyrosine modification. An interaction with calmodulin and ITPR3 region spans residues 812 to 831; the sequence is HTMGRLRRDRWSSVVPRVVE. S824 carries the phosphoserine modification.

It belongs to the transient receptor (TC 1.A.4) family. TrpV subfamily. TRPV4 sub-subfamily. In terms of assembly, homotetramer. Interacts with calmodulin. Interacts with MAP7 and Src family Tyr protein kinases LYN, SRC, FYN, HCK, LCK and YES. Interacts with CTNNB1. The TRPV4 and CTNNB1 complex can interact with CDH1. Part of a complex containing MLC1, AQP4, HEPACAM and ATP1B1. Interacts with PACSIN1, PACSIN2 and PACSIN3 (via SH3 domain). Interacts with ITPR3. Interacts with AQP5; the interaction is probably indirect and regulates TRPV4 activation by hypotonicity. Interacts with ANO1. Interacts (via C-terminus) with PKD2 (via C-terminus). Interacts with DDX3X; this interaction is decreased when the channel is activated. In terms of processing, N-glycosylated. In terms of tissue distribution, expressed lung, spleen, kidney, testis, fat, and at very low levels in trigeminal ganglia.

Its subcellular location is the cell membrane. It localises to the apical cell membrane. It is found in the cell junction. The protein localises to the adherens junction. The protein resides in the cell projection. Its subcellular location is the cilium. The enzyme catalyses Ca(2+)(in) = Ca(2+)(out). Functionally, non-selective calcium permeant cation channel involved in osmotic sensitivity and mechanosensitivity. Activation by exposure to hypotonicity within the physiological range exhibits an outward rectification. Also activated by heat, low pH, citrate and phorbol esters. Increase of intracellular Ca(2+) potentiates currents. Channel activity seems to be regulated by a calmodulin-dependent mechanism with a negative feedback mechanism. Acts as a regulator of intracellular Ca(2+) in synoviocytes. Plays an obligatory role as a molecular component in the nonselective cation channel activation induced by 4-alpha-phorbol 12,13-didecanoate and hypotonic stimulation in synoviocytes and also regulates production of IL-8. Together with PKD2, forms mechano- and thermosensitive channels in cilium. Promotes cell-cell junction formation in skin keratinocytes and plays an important role in the formation and/or maintenance of functional intercellular barriers. Negatively regulates expression of PPARGC1A, UCP1, oxidative metabolism and respiration in adipocytes. Regulates expression of chemokines and cytokines related to pro-inflammatory pathway in adipocytes. Together with AQP5, controls regulatory volume decrease in salivary epithelial cells. Required for normal development and maintenance of bone and cartilage. In its inactive state, may sequester DDX3X at the plasma membrane. When activated, the interaction between both proteins is affected and DDX3X relocalizes to the nucleus. In neurons of the central nervous system, could play a role in triggering voluntary water intake in response to increased sodium concentration in body fluid. The chain is Transient receptor potential cation channel subfamily V member 4 (Trpv4) from Rattus norvegicus (Rat).